A 543-amino-acid chain; its full sequence is Sarafotoxin (543 aa).

Residues 1 to 23 form the signal peptide; that stretch reads MALLPRLAAGGLLLLLALAALEG. A propeptide spanning residues 24-69 is cleaved from the precursor; that stretch reads KPAPSALSQLLEKRSEDQAAAGRIIDGGDTKQAARDPSPQRNVEPL. Residues 45 to 65 form a disordered region; that stretch reads GRIIDGGDTKQAARDPSPQRN. A run of 12 repeats spans residues 51–90, 91–130, 131–170, 171–210, 211–250, 251–290, 291–330, 331–370, 371–410, 411–450, 451–490, and 491–530. The tract at residues 51–530 is 12 X 40 AA tandem repeats; sequence GDTKQAARDP…LNFCHQDVIW (480 aa). Cystine bridges form between Cys-70–Cys-84 and Cys-72–Cys-80. Positions 92–109 are excised as a propeptide; it reads DTKQAARDPSPQRNVEPL. 2 cysteine pairs are disulfide-bonded: Cys-110–Cys-124 and Cys-112–Cys-120. A propeptide spanning residues 132–149 is cleaved from the precursor; sequence DTKQAARDPSPQRNVEPL. 2 disulfide bridges follow: Cys-150–Cys-164 and Cys-152–Cys-160. Residues 172-189 constitute a propeptide that is removed on maturation; that stretch reads DTKQAARDPSPQRNVEPL. Cystine bridges form between Cys-190–Cys-204 and Cys-192–Cys-200. Positions 212–229 are excised as a propeptide; it reads DTKQAARDPSPQRNVEPL. 2 disulfide bridges follow: Cys-230–Cys-244 and Cys-232–Cys-240. Positions 252-269 are excised as a propeptide; the sequence is DTKQAARDPSPQRNVEPL. Cystine bridges form between Cys-270-Cys-284 and Cys-272-Cys-280. A propeptide spanning residues 292–309 is cleaved from the precursor; sequence DTKQAARDPSPQRNVEPL. 2 disulfides stabilise this stretch: Cys-310-Cys-324 and Cys-312-Cys-320. A propeptide spanning residues 332–349 is cleaved from the precursor; that stretch reads DTKQAARDPSPQRNVEPL. 2 disulfide bridges follow: Cys-350–Cys-364 and Cys-352–Cys-360. The propeptide occupies 372-389; that stretch reads DTKQAARDPSPQRNVEPL. Intrachain disulfides connect Cys-390-Cys-404 and Cys-392-Cys-400. Residues 412 to 429 constitute a propeptide that is removed on maturation; it reads DTKQAARDPSPQRNVEPL. Cystine bridges form between Cys-430-Cys-444 and Cys-432-Cys-440. Positions 452–469 are excised as a propeptide; it reads DTKQAARDPSPQRNVEPL. 2 disulfides stabilise this stretch: Cys-470/Cys-484 and Cys-472/Cys-480. A propeptide spanning residues 492–509 is cleaved from the precursor; sequence DTKQAARDPSPQRNVEPL. 2 cysteine pairs are disulfide-bonded: Cys-510-Cys-524 and Cys-512-Cys-520. Positions 532–543 are excised as a propeptide; sequence NADTSANPEFLG.

The protein belongs to the endothelin/sarafotoxin family. In terms of tissue distribution, expressed by the venom gland.

Its subcellular location is the secreted. Vasoconstrictor activity. These toxins cause cardiac arrest probably as a result of coronary vasospasm. Functionally, vasoconstrictor activity. Causes cardiac arrest probably as a result of coronary vasospasm. Displays high agonistic activities towards endothelin-2 receptor (EDNRB) (displays affinity in the picomolar range) and endothelin-1 receptor (EDNRA) (lower affinities). In Atractaspis engaddensis (Israeli burrowing asp), this protein is Sarafotoxin.